The following is a 511-amino-acid chain: Dihydrolipoyl dehydrogenase, mitochondrial (511 aa).

Residues 75–84 (EKRGTLGGTC), lysine 93, glycine 157, and 187–189 (TGS) each bind FAD. A disulfide bond links cysteine 84 and cysteine 89. Residues 224 to 231 (GGGIIGLE), glutamate 247, leucine 281, and glycine 316 each bind NAD(+). FAD contacts are provided by residues aspartate 357 and 363-366 (MLAH). Histidine 489 (proton acceptor) is an active-site residue.

Belongs to the class-I pyridine nucleotide-disulfide oxidoreductase family. Homodimer. The cofactor is FAD.

It localises to the mitochondrion matrix. It catalyses the reaction N(6)-[(R)-dihydrolipoyl]-L-lysyl-[protein] + NAD(+) = N(6)-[(R)-lipoyl]-L-lysyl-[protein] + NADH + H(+). Functionally, lipoamide dehydrogenase is a component of the alpha-ketoacid dehydrogenase complexes. Malfunction of this protein blocks the progression of cell cycle from G1 to S phase. This is Dihydrolipoyl dehydrogenase, mitochondrial (dld1) from Schizosaccharomyces pombe (strain 972 / ATCC 24843) (Fission yeast).